The following is a 956-amino-acid chain: Lon protease homolog, mitochondrial 1 (956 aa).

2 disordered regions span residues 37–57 (NNNN…NNNN) and 83–123 (KKKG…GNEK). Basic and acidic residues predominate over residues 91–123 (NNDDNDNEKNEKNEKKVKNEKKEKNEKNDGNEK). Positions 159–357 (VVIYPSNSVN…MLYHMILNEQ (199 aa)) constitute a Lon N-terminal domain. 511-518 (GPPGTGKT) serves as a coordination point for ATP. Positions 747–945 (VTPIGVVNGL…KDVFEVAFPN (199 aa)) constitute a Lon proteolytic domain. Residues 777–795 (KPLSSLPPSQQQQNQLEPS) show a composition bias toward low complexity. The disordered stretch occupies residues 777–800 (KPLSSLPPSQQQQNQLEPSIKTTG). Active-site residues include Ser851 and Lys894.

This sequence belongs to the peptidase S16 family. Homohexamer or homoheptamer. Organized in a ring with a central cavity.

The protein localises to the mitochondrion matrix. It catalyses the reaction Hydrolysis of proteins in presence of ATP.. Functionally, ATP-dependent serine protease that mediates the selective degradation of misfolded, unassembled or oxidatively damaged polypeptides as well as certain short-lived regulatory proteins in the mitochondrial matrix. May also have a chaperone function in the assembly of inner membrane protein complexes. Participates in the regulation of mitochondrial gene expression and in the maintenance of the integrity of the mitochondrial genome. Binds to mitochondrial DNA in a site-specific manner. The polypeptide is Lon protease homolog, mitochondrial 1 (Dictyostelium discoideum (Social amoeba)).